We begin with the raw amino-acid sequence, 89 residues long: Small ribosomal subunit protein uS14 (89 aa).

A disordered region spans residues 32–51; the sequence is DYEGLQKLPKNSSPVRLHNR.

This sequence belongs to the universal ribosomal protein uS14 family. In terms of assembly, part of the 30S ribosomal subunit. Contacts proteins S3 and S10.

Its function is as follows. Binds 16S rRNA, required for the assembly of 30S particles and may also be responsible for determining the conformation of the 16S rRNA at the A site. The sequence is that of Small ribosomal subunit protein uS14 from Christiangramia forsetii (strain DSM 17595 / CGMCC 1.15422 / KT0803) (Gramella forsetii).